A 61-amino-acid polypeptide reads, in one-letter code: Metallothionein-1 (61 aa).

N-acetylmethionine is present on M1. Residues 1 to 29 (MDPNCSCPTGGSCTCAGSCKCKACRCPSC) form a beta region. A divalent metal cation contacts are provided by C5, C7, C13, C15, C19, C21, C24, C26, C29, C33, C34, C36, C37, C41, C44, C48, C50, C57, C59, and C60. The interval 30–61 (KKSCCSCCPVGCAKCAQGCVCKGASDKCSCCA) is alpha.

This sequence belongs to the metallothionein superfamily. Type 1 family. As to quaternary structure, monomer.

In terms of biological role, metallothioneins have a high content of cysteine residues that bind various heavy metals; these proteins are transcriptionally regulated by both heavy metals and glucocorticoids. The polypeptide is Metallothionein-1 (MT1) (Bos taurus (Bovine)).